A 413-amino-acid polypeptide reads, in one-letter code: MTIEEEVLKRIKPSKEDEEKLRERAQIILDRLKGYNAEIEGSFRKGTWLKGDTDIDIFVFFPKSVGKEYLREKALKELIERFRDLNYKIAYAEHPYLIVYVDDVEIDVVPALSIESGEEAITAADRTPFHTKYVISHLDEKGRDEVRLLKRFLKGIGVYGAEIKVKGFSGYVTELLIIYYGSFKEVLRNASKFRPPVRIELVRPKKEFDSPLIVPDPVDPKRNASSAVSLKSLATFALASKIYLEKPSMEFFFPSKPGRQTIKGDILLVKVKIEESTVEDIIWGQVWRNVEKLKTLISHEGYRVIDISAWGDAENITIGIQLESKSIGEYYLNVGPYFYLHNVKNFIEENENVWIGEDGRLYSIKRRRYTVEEIIKRNLSFKQKFTYELQWLTEEVDDPWINLFLRKTPSWLK.

Residues Ser-42 and Lys-45 each coordinate ATP. CTP-binding residues include Ser-42 and Lys-45. 3 residues coordinate Mg(2+): Asp-54, Asp-56, and Asp-107. Residues His-130, Lys-150, and Tyr-159 each contribute to the ATP site. The CTP site is built by His-130, Lys-150, and Tyr-159.

Belongs to the tRNA nucleotidyltransferase/poly(A) polymerase family. Archaeal CCA-adding enzyme subfamily. Homodimer. Mg(2+) is required as a cofactor.

It carries out the reaction a tRNA precursor + 2 CTP + ATP = a tRNA with a 3' CCA end + 3 diphosphate. It catalyses the reaction a tRNA with a 3' CCA end + 2 CTP + ATP = a tRNA with a 3' CCACCA end + 3 diphosphate. In terms of biological role, catalyzes the addition and repair of the essential 3'-terminal CCA sequence in tRNAs without using a nucleic acid template. Adds these three nucleotides in the order of C, C, and A to the tRNA nucleotide-73, using CTP and ATP as substrates and producing inorganic pyrophosphate. tRNA 3'-terminal CCA addition is required both for tRNA processing and repair. Also involved in tRNA surveillance by mediating tandem CCA addition to generate a CCACCA at the 3' terminus of unstable tRNAs. While stable tRNAs receive only 3'-terminal CCA, unstable tRNAs are marked with CCACCA and rapidly degraded. The polypeptide is CCA-adding enzyme (Sulfurisphaera tokodaii (strain DSM 16993 / JCM 10545 / NBRC 100140 / 7) (Sulfolobus tokodaii)).